We begin with the raw amino-acid sequence, 152 residues long: Nucleoside diphosphate kinase B (152 aa).

The interaction with AKAP13 stretch occupies residues 1–66; the sequence is MAHAERTFIA…DRPFFPGLVK (66 aa). Positions 12, 60, 88, 94, 105, and 115 each coordinate ATP. Histidine 118 (pros-phosphohistidine intermediate) is an active-site residue.

This sequence belongs to the NDK family. As to quaternary structure, hexamer of two different chains: An and B (A6, A5B, A4B2, A3B3, A2B4, AB5, B6). Interacts with CAPN8. Interacts with AKAP13. Interacts with ITGB1BP1 (via C-terminal domain region). Interacts with BCL2L10. It depends on Mg(2+) as a cofactor.

The protein localises to the cytoplasm. The protein resides in the cell projection. Its subcellular location is the lamellipodium. It is found in the ruffle. It localises to the nucleus. The catalysed reaction is a 2'-deoxyribonucleoside 5'-diphosphate + ATP = a 2'-deoxyribonucleoside 5'-triphosphate + ADP. It catalyses the reaction a ribonucleoside 5'-diphosphate + ATP = a ribonucleoside 5'-triphosphate + ADP. It carries out the reaction ATP + protein L-histidine = ADP + protein N-phospho-L-histidine.. Functionally, major role in the synthesis of nucleoside triphosphates other than ATP. The ATP gamma phosphate is transferred to the NDP beta phosphate via a ping-pong mechanism, using a phosphorylated active-site intermediate. Negatively regulates Rho activity by interacting with AKAP13/LBC. Acts as a transcriptional activator of the MYC gene; binds DNA non-specifically. Binds to both single-stranded guanine- and cytosine-rich strands within the nuclease hypersensitive element (NHE) III(1) region of the MYC gene promoter. Does not bind to duplex NHE III(1). Has G-quadruplex (G4) DNA-binding activity, which is independent of its nucleotide-binding and kinase activity. Binds both folded and unfolded G4 with similar low nanomolar affinities. Stabilizes folded G4s regardless of whether they are prefolded or not. Exhibits histidine protein kinase activity. This chain is Nucleoside diphosphate kinase B (NME2), found in Bos taurus (Bovine).